Consider the following 165-residue polypeptide: uncharacterized protein (165 aa).

Belongs to the SixA phosphatase family.

This is an uncharacterized protein from Picosynechococcus sp. (strain ATCC 27264 / PCC 7002 / PR-6) (Agmenellum quadruplicatum).